Here is a 256-residue protein sequence, read N- to C-terminus: Pimeloyl-[acyl-carrier protein] methyl ester esterase (256 aa).

Residues 15-242 (HLVLLHGWGL…AAHAPFISHP (228 aa)) form the AB hydrolase-1 domain. Substrate-binding positions include Trp22, 82–83 (SL), and 143–147 (FLALQ). The active-site Nucleophile is the Ser82. Active-site residues include Asp207 and His235. His235 is a binding site for substrate.

It belongs to the AB hydrolase superfamily. Carboxylesterase BioH family. In terms of assembly, monomer.

It localises to the cytoplasm. The enzyme catalyses 6-carboxyhexanoyl-[ACP] methyl ester + H2O = 6-carboxyhexanoyl-[ACP] + methanol + H(+). It functions in the pathway cofactor biosynthesis; biotin biosynthesis. The physiological role of BioH is to remove the methyl group introduced by BioC when the pimeloyl moiety is complete. It allows to synthesize pimeloyl-ACP via the fatty acid synthetic pathway through the hydrolysis of the ester bonds of pimeloyl-ACP esters. This is Pimeloyl-[acyl-carrier protein] methyl ester esterase from Escherichia coli O17:K52:H18 (strain UMN026 / ExPEC).